The sequence spans 200 residues: Transcription elongation factor A protein-like 5 (200 aa).

Composition is skewed to basic and acidic residues over residues 1–49 (MEKF…KLEV), 61–85 (GEGKPEKQGKSDGEGKRQGESKPDS), 94–106 (RAAEKRPAEDYVP), 114–153 (DRGTDDSPKNSQEDLQDRHVSSEEMMRECADMTRAQEELR), and 190–200 (GQKDLEDAPFV). Residues 1–200 (MEKFYKENEG…QKDLEDAPFV (200 aa)) are disordered.

The protein belongs to the TFS-II family. TFA subfamily.

Its subcellular location is the nucleus. Its function is as follows. May be involved in transcriptional regulation. This chain is Transcription elongation factor A protein-like 5 (Tceal5), found in Mus musculus (Mouse).